Reading from the N-terminus, the 426-residue chain is Protein arginine N-methyltransferase 2 (426 aa).

2 disordered regions span residues aspartate 65–serine 88 and aspartate 155–alanine 175. Residues asparagine 73 to serine 88 are compositionally biased toward polar residues. The span at aspartate 155–glutamine 168 shows a compositional bias: acidic residues. In terms of domain architecture, RMT2 spans proline 207–aspartate 426. Residues tyrosine 214, methionine 243, histidine 263 to valine 268, glutamate 284 to histidine 286, tryptophan 311 to glutamine 312, and aspartate 331 contribute to the S-adenosyl-L-methionine site.

Belongs to the class I-like SAM-binding methyltransferase superfamily. RMT2 methyltransferase family. Monomer.

The protein localises to the cytoplasm. It localises to the nucleus. S-adenosyl-L-methionine-dependent protein-arginine N-methyltransferase that methylates the delta-nitrogen atom of arginine residues to form N5-methylarginine (type IV) in target proteins. Monomethylates ribosomal protein L12. The sequence is that of Protein arginine N-methyltransferase 2 from Emericella nidulans (strain FGSC A4 / ATCC 38163 / CBS 112.46 / NRRL 194 / M139) (Aspergillus nidulans).